The chain runs to 103 residues: Protein reprimo A (103 aa).

The helical transmembrane segment at 50 to 70 threads the bilayer; it reads IVQIAVMCVLSLTVVFGIFFL.

It belongs to the reprimo family.

Its subcellular location is the cytoplasm. The protein resides in the membrane. In terms of biological role, may be involved in the regulation of p53-dependent G2 arrest of the cell cycle. The protein is Protein reprimo A of Danio rerio (Zebrafish).